Here is a 589-residue protein sequence, read N- to C-terminus: Phenylalanine--tRNA ligase beta subunit (589 aa).

One can recognise a B5 domain in the interval 302–379 (LAYRKEMVRA…IAYGYNNIQM (78 aa)). Positions 357, 363, 366, and 367 each coordinate Mg(2+).

This sequence belongs to the phenylalanyl-tRNA synthetase beta subunit family. Type 2 subfamily. As to quaternary structure, heterotetramer; dimer of two heterodimers formed by FARSA and FARSB. Requires Mg(2+) as cofactor.

It localises to the cytoplasm. The enzyme catalyses tRNA(Phe) + L-phenylalanine + ATP = L-phenylalanyl-tRNA(Phe) + AMP + diphosphate + H(+). The sequence is that of Phenylalanine--tRNA ligase beta subunit (FARSB) from Homo sapiens (Human).